The sequence spans 651 residues: Acetyl-coenzyme A synthetase (651 aa).

CoA-binding positions include 189–192 (RGGK), Thr-311, and Asn-335. Residues 387-389 (GEP), 411-416 (DTWWQT), Asp-500, and Arg-515 each bind ATP. Ser-523 serves as a coordination point for CoA. Arg-526 provides a ligand contact to ATP. Residues Val-537, His-539, and Val-542 each coordinate Mg(2+). Arg-586 is a CoA binding site. An N6-acetyllysine modification is found at Lys-611.

Belongs to the ATP-dependent AMP-binding enzyme family. Requires Mg(2+) as cofactor. Acetylated. Deacetylation by the SIR2-homolog deacetylase activates the enzyme.

It carries out the reaction acetate + ATP + CoA = acetyl-CoA + AMP + diphosphate. Its function is as follows. Catalyzes the conversion of acetate into acetyl-CoA (AcCoA), an essential intermediate at the junction of anabolic and catabolic pathways. AcsA undergoes a two-step reaction. In the first half reaction, AcsA combines acetate with ATP to form acetyl-adenylate (AcAMP) intermediate. In the second half reaction, it can then transfer the acetyl group from AcAMP to the sulfhydryl group of CoA, forming the product AcCoA. This is Acetyl-coenzyme A synthetase from Brucella melitensis biotype 2 (strain ATCC 23457).